The primary structure comprises 658 residues: Outer dynein arm-docking complex subunit 1 (658 aa).

Coiled coils occupy residues 11 to 156 (KEVH…RYLN), 186 to 234 (REEA…KNDE), and 303 to 380 (NFIN…TDIQ). Disordered stretches follow at residues 496-552 (DEEE…SVSH) and 574-658 (GAPV…RGYN). Phosphoserine is present on residues S500, S506, S507, and S509. 4 stretches are compositionally biased toward low complexity: residues 506–519 (SSPS…QISL), 574–583 (GAPVSSRSSQ), 592–604 (TSSS…TGYL), and 621–639 (SMGS…HASS).

Belongs to the ODA1/DCC2 family. As to quaternary structure, component of the outer dynein arm-docking complex along with ODAD2, ODAD3, ODAD4 and CLXN. Interacts with ODAD3. Interacts with ODAD4; this interaction may facilitate the recruitment and/or attachment of outer dynein arm docking complex proteins including ODAD1, ODAD3, and ODAD4 to ciliary axonemes. Interacts with DNAH9. Interacts with MNS1. Interacts with PIERCE1 and PIERCE2; the interactions link the outer dynein arms docking complex (ODA-DC) to the internal microtubule inner proteins (MIP) in cilium axoneme. In terms of tissue distribution, expressed in motile ciliated tissues.

It localises to the cytoplasm. The protein localises to the cytoskeleton. The protein resides in the cilium axoneme. In terms of biological role, component of the outer dynein arm-docking complex that mediates outer dynein arms (ODA) binding onto the doublet microtubule. Involved in mediating assembly of both ODAs and their axonemal docking complex onto ciliary microtubules. The sequence is that of Outer dynein arm-docking complex subunit 1 (Odad1) from Mus musculus (Mouse).